Reading from the N-terminus, the 185-residue chain is MLRRGSLRNPLAICLLWWLGVVAAATEETREPTYFTCGCVIQNHVLKGAVKLYGQFPSPKTLRASAWLHDGENHERHRQPILVEGTATATEALYILLPTELSSPEGNRPRNYSATLTLASRDCYERFVCPVYDSGTPMGVLMNLTYLWYLGDYGAILKIYFGLFCGACVITRSLLLICGYYPPRE.

A signal peptide spans 1–24; sequence MLRRGSLRNPLAICLLWWLGVVAA. Topologically, residues 25–149 are lumenal; that stretch reads ATEETREPTY…VLMNLTYLWY (125 aa). The Ig-like H-type domain occupies 30 to 133; it reads REPTYFTCGC…YERFVCPVYD (104 aa). A disulfide bridge connects residues C39 and C129. 2 N-linked (GlcNAc...) asparagine; by host glycosylation sites follow: N111 and N143. The helical transmembrane segment at 150 to 170 threads the bilayer; sequence LGDYGAILKIYFGLFCGACVI. Over 171–185 the chain is Cytoplasmic; the sequence is TRSLLLICGYYPPRE.

This sequence belongs to the HHV-5 US6 protein family.

Its subcellular location is the host endoplasmic reticulum membrane. In terms of biological role, plays a role in the modulation of host immune response by down-regulating the surface presentation of HLA-G molecules. Selectively targets HLA-G molecules for degradation by a mechanism distinct from the one used by US11. This is Membrane glycoprotein US10 (US10) from Human cytomegalovirus (strain Merlin) (HHV-5).